Consider the following 188-residue polypeptide: Myc target protein 1 (188 aa).

A helical transmembrane segment spans residues 24–44 (FTVSVAIGLAIGGFLWALFVF). The Bipartite nuclear localization signal signature appears at 47 to 65 (RRRRASAPISQWSPTRRPR). 4 positions are modified to phosphoserine: Ser87, Ser90, Ser93, and Ser101.

It belongs to the MYCT1 family. In terms of tissue distribution, highly expressed in lung, heart, and skeletal muscle. Expressed in brain, eye, liver, kidney, smooth muscle, pancreas, thyroid, thymus, submaxillary gland, spleen, testis, ovary, prostate, epididymis, and uterus. Deregulated expression promotes apoptosis in response to growth factor deprivation. Overexpression in synergy with CCNB1 may promote genomic instability.

The protein localises to the nucleus membrane. May regulate certain MYC target genes, MYC seems to be a direct upstream transcriptional activator. Does not seem to significantly affect growth cell capacity. Overexpression seems to mediate many of the known phenotypic features associated with MYC, including promotion of apoptosis, alteration of morphology, enhancement of anchorage-independent growth, tumorigenic conversion, promotion of genomic instability and inhibition of hematopoietic differentiation. This Mus musculus (Mouse) protein is Myc target protein 1 (Myct1).